Here is a 109-residue protein sequence, read N- to C-terminus: Nucleoid-associated protein PM0205 (109 aa).

The protein belongs to the YbaB/EbfC family. Homodimer.

The protein localises to the cytoplasm. It is found in the nucleoid. Functionally, binds to DNA and alters its conformation. May be involved in regulation of gene expression, nucleoid organization and DNA protection. The polypeptide is Nucleoid-associated protein PM0205 (Pasteurella multocida (strain Pm70)).